Reading from the N-terminus, the 108-residue chain is Protein YcgL (108 aa).

One can recognise a YcgL domain in the interval methionine 12–leucine 96.

This is Protein YcgL from Escherichia coli O17:K52:H18 (strain UMN026 / ExPEC).